Here is a 453-residue protein sequence, read N- to C-terminus: Chromosomal replication initiator protein DnaA (453 aa).

The segment at 1 to 71 (MSEKEIWEKV…QAILFDVVGY (71 aa)) is domain I, interacts with DnaA modulators. Residues 71–114 (YEVKPHFITTEELANYSNNETATPKETTKPSTETTEDNHVLGRE) are domain II. A domain III, AAA+ region region spans residues 115-331 (QFNAHNTFDT…GALTRLLAYS (217 aa)). Gly-159, Gly-161, Lys-162, and Thr-163 together coordinate ATP. Residues 332 to 453 (QLLGKPITTE…ENLEKEIRNV (122 aa)) form a domain IV, binds dsDNA region.

This sequence belongs to the DnaA family. Oligomerizes as a right-handed, spiral filament on DNA at oriC.

It is found in the cytoplasm. Plays an essential role in the initiation and regulation of chromosomal replication. ATP-DnaA binds to the origin of replication (oriC) to initiate formation of the DNA replication initiation complex once per cell cycle. Binds the DnaA box (a 9 base pair repeat at the origin) and separates the double-stranded (ds)DNA. Forms a right-handed helical filament on oriC DNA; dsDNA binds to the exterior of the filament while single-stranded (ss)DNA is stabiized in the filament's interior. The ATP-DnaA-oriC complex binds and stabilizes one strand of the AT-rich DNA unwinding element (DUE), permitting loading of DNA polymerase. After initiation quickly degrades to an ADP-DnaA complex that is not apt for DNA replication. Binds acidic phospholipids. The polypeptide is Chromosomal replication initiator protein DnaA (Staphylococcus aureus (strain Mu3 / ATCC 700698)).